Consider the following 325-residue polypeptide: tRNA N6-adenosine threonylcarbamoyltransferase (325 aa).

Residues His107, His111, and Tyr127 each contribute to the Fe cation site. Residues 127–131 (YVSGG), Asp159, Gly172, Glu176, and Asn257 each bind substrate. Asp285 serves as a coordination point for Fe cation.

Belongs to the KAE1 / TsaD family. In terms of assembly, monomer. Component of the KEOPS complex that consists of Kae1, Bud32, Cgi121 and Pcc1; the whole complex dimerizes. Fe(2+) serves as cofactor.

It is found in the cytoplasm. It catalyses the reaction L-threonylcarbamoyladenylate + adenosine(37) in tRNA = N(6)-L-threonylcarbamoyladenosine(37) in tRNA + AMP + H(+). Functionally, required for the formation of a threonylcarbamoyl group on adenosine at position 37 (t(6)A37) in tRNAs that read codons beginning with adenine. Is a component of the KEOPS complex that is probably involved in the transfer of the threonylcarbamoyl moiety of threonylcarbamoyl-AMP (TC-AMP) to the N6 group of A37. Kae1 likely plays a direct catalytic role in this reaction, but requires other protein(s) of the complex to fulfill this activity. This is tRNA N6-adenosine threonylcarbamoyltransferase from Thermococcus gammatolerans (strain DSM 15229 / JCM 11827 / EJ3).